We begin with the raw amino-acid sequence, 151 residues long: Aspartate carbamoyltransferase regulatory chain (151 aa).

Zn(2+)-binding residues include Cys-108, Cys-113, Cys-138, and Cys-141.

The protein belongs to the PyrI family. In terms of assembly, contains catalytic and regulatory chains. Requires Zn(2+) as cofactor.

Functionally, involved in allosteric regulation of aspartate carbamoyltransferase. The protein is Aspartate carbamoyltransferase regulatory chain of Pyrobaculum arsenaticum (strain DSM 13514 / JCM 11321 / PZ6).